A 306-amino-acid chain; its full sequence is Porphobilinogen deaminase (306 aa).

C239 carries the post-translational modification S-(dipyrrolylmethanemethyl)cysteine.

Belongs to the HMBS family. In terms of assembly, monomer. Dipyrromethane is required as a cofactor.

The catalysed reaction is 4 porphobilinogen + H2O = hydroxymethylbilane + 4 NH4(+). Its pathway is porphyrin-containing compound metabolism; protoporphyrin-IX biosynthesis; coproporphyrinogen-III from 5-aminolevulinate: step 2/4. Functionally, tetrapolymerization of the monopyrrole PBG into the hydroxymethylbilane pre-uroporphyrinogen in several discrete steps. This chain is Porphobilinogen deaminase, found in Helicobacter pylori (strain P12).